Reading from the N-terminus, the 447-residue chain is F-box only protein 5 (447 aa).

Phosphoserine occurs at positions 94 and 102. Positions 135–244 (ALETSRLYED…IGRKMGLECV (110 aa)) are interaction with EVI5. One can recognise an F-box domain in the interval 250 to 296 (LFRRGLRHVLATILAQLSDMDLINVSKVSTTWKKILEDDKGAFQLYS). The tract at residues 261–339 (TILAQLSDMD…KSAAQTSLKK (79 aa)) is sufficient for interaction with RPS6KA2; Prevents association of CDC20 with RPS6KA2. The requires for efficient binding to CDC20 stretch occupies residues 261–409 (TILAQLSDMD…GCGFDYCTKC (149 aa)). The interval 305 to 447 (NNNKFSPHAS…KKSKKNLRRL (143 aa)) is inhibits APC ubiquitin ligase activity. Residues 322-325 (RTPL) form a competitively blocks access of APC substrates to the D-box coreceptor formed by FZR1 and ANAPC10 region. The segment at 337-358 (LKKDAQTKLSNQGDQKGSTYSR) is disordered. The segment covering 343–357 (TKLSNQGDQKGSTYS) has biased composition (polar residues). A ZBR-type zinc finger spans residues 374–422 (SLKACIRCNSPAKYDCYLQRATCKREGCGFDYCTKCLCNYHTTKDCSDG). Residues Cys-378, Cys-381, Cys-396, Cys-401, Cys-406, Cys-409, His-414, and Cys-419 each coordinate Zn(2+). Residues 378–420 (CIRCNSPAKYDCYLQRATCKREGCGFDYCTKCLCNYHTTKDCS) are allows a rapid multiple mono-ubiquitination of the APC substrate, but strongly inhibits the slow ubiquitin chain elongation catalyzed by UBCH10. The interval 437 to 447 (TKKSKKNLRRL) is sufficient to suppress UBE2S activity; essential for interaction with UBE2S; competitively inhibits the rapide ubiquitin chain elongation by UBE2D1 which blocks UBE2D1 with APC; indispensable for recruitment and position of FBXO5 to the catalytic site of APC; abrogates the inhibition of ubiquitin chain assembly primarily catalyzed by UBE2S; inhibits the ubiquitination by either UBE2C or UBE2D1.

Part of a SCF (SKP1-cullin-F-box) protein ligase complex. Interacts with BTRC; mediates proteolysis by the SCF ubiquitin ligase complex leading to activation of APC in late mitosis and subsequent mitotic progression. Interacts with FZR1/CDH1 and the N-terminal substrate-binding domain of CDC20; prevents APC activation. Also interacts with EVI5 which blocks its phosphorylation by PLK1 and prevents its subsequent binding to BTRC and degradation. Interacts simultaneously with anaphase promoting complex (APC), through at least ANAPC2, CDC23, CDC27, the APC substrate GMNN and the APC activator FZR1. Interacts with UBE2S; interferes with the activity of UBE2S mainly by disrupting the dynamic electrostatic association between the C-terminal tail of UBE2S and ANAPC2. Interacts with RPS6KA2; cooperates to induce the metaphase arrest of early blastomeres; increases and stabilizes interaction of FBXO5 with CDC20. Post-translationally, phosphorylation by CDK2 and subsequently by PLK1 triggers degradation during early mitosis through ubiquitin-mediated proteolysis by the SCF ubiquitin ligase complex containing the F-box protein BTRC. This degradation is necessary for the activation of APC in late mitosis and subsequent mitotic progression. Phosphorylated by RPS6KA2; increases and stabilizes interaction with CDC20. In terms of processing, ubiquitinated by the SCF(BTRC) complex following phosphorylation by PLK1. Undergoes both 'Lys-11' and 'Lys-48'-linked polyubiquitination by APC-FZR1 complex leading to degradation by proteasome during G1 phase. Degraded through the SCF(BTRC) complex; degradation occurs during oocyte maturation, between germinal vesicle breakdown (GVBD) and meiosis I, and is required for the meiosis I-meiosis II transition.

It is found in the nucleus. The protein resides in the cytoplasm. The protein localises to the cytoskeleton. It localises to the spindle. The protein operates within protein modification; protein ubiquitination. Its function is as follows. Regulator of APC activity during mitotic and meiotic cell cycle. During mitotic cell cycle plays a role as both substrate and inhibitor of APC-FZR1 complex. During G1 phase, plays a role as substrate of APC-FZR1 complex E3 ligase. Then switches as an inhibitor of APC-FZR1 complex during S and G2 leading to cell-cycle commitment. As APC inhibitor, prevents the degradation of APC substrates at multiple levels: by interacting with APC and blocking access of APC substrates to the D-box coreceptor, formed by FZR1 and ANAPC10; by suppressing ubiquitin ligation and chain elongation by APC by preventing the UBE2C and UBE2S activities. Plays a role in genome integrity preservation by coordinating DNA replication with mitosis through APC inhibition in interphase to stabilize CCNA2 and GMNN in order to promote mitosis and prevent rereplication and DNA damage-induced cellular senescence. During oocyte maturation, plays a role in meiosis through inactivation of APC-FZR1 complex. Inhibits APC through RPS6KA2 interaction that increases FBXO5 affiniy for CDC20 leading to the metaphase arrest of the second meiotic division before fertilization. Controls entry into the first meiotic division through inactivation of APC-FZR1 complex. Promotes migration and osteogenic differentiation of mesenchymal stem cells. The chain is F-box only protein 5 from Homo sapiens (Human).